A 281-amino-acid polypeptide reads, in one-letter code: Pantothenate synthetase (281 aa).

Position 30–37 (30–37) interacts with ATP; sequence MGYLHEGH. Histidine 37 (proton donor) is an active-site residue. Position 61 (glutamine 61) interacts with (R)-pantoate. Position 61 (glutamine 61) interacts with beta-alanine. 147–150 contacts ATP; it reads GEKD. Glutamine 153 serves as a coordination point for (R)-pantoate. ATP-binding positions include isoleucine 176 and 184 to 187; that span reads KSSR.

Belongs to the pantothenate synthetase family. Homodimer.

The protein resides in the cytoplasm. The enzyme catalyses (R)-pantoate + beta-alanine + ATP = (R)-pantothenate + AMP + diphosphate + H(+). It participates in cofactor biosynthesis; (R)-pantothenate biosynthesis; (R)-pantothenate from (R)-pantoate and beta-alanine: step 1/1. In terms of biological role, catalyzes the condensation of pantoate with beta-alanine in an ATP-dependent reaction via a pantoyl-adenylate intermediate. This is Pantothenate synthetase from Clostridium botulinum (strain Okra / Type B1).